A 507-amino-acid chain; its full sequence is Histidine ammonia-lyase (507 aa).

A cross-link (5-imidazolinone (Ala-Gly)) is located at residues 142-144 (ASG). Position 143 is a 2,3-didehydroalanine (Ser) (Ser-143).

The protein belongs to the PAL/histidase family. Contains an active site 4-methylidene-imidazol-5-one (MIO), which is formed autocatalytically by cyclization and dehydration of residues Ala-Ser-Gly.

The protein localises to the cytoplasm. The catalysed reaction is L-histidine = trans-urocanate + NH4(+). The protein operates within amino-acid degradation; L-histidine degradation into L-glutamate; N-formimidoyl-L-glutamate from L-histidine: step 1/3. This is Histidine ammonia-lyase from Maricaulis maris (strain MCS10) (Caulobacter maris).